A 102-amino-acid chain; its full sequence is Small ribosomal subunit protein uS10 (102 aa).

Belongs to the universal ribosomal protein uS10 family. In terms of assembly, part of the 30S ribosomal subunit.

In terms of biological role, involved in the binding of tRNA to the ribosomes. This chain is Small ribosomal subunit protein uS10, found in Pyrococcus abyssi (strain GE5 / Orsay).